Reading from the N-terminus, the 351-residue chain is Formyl peptide receptor 2 (351 aa).

Residues 1–29 lie on the Extracellular side of the membrane; it reads MESNYSIHLNGSEVVVYDSTISRVLWILS. Residues N4 and N10 are each glycosylated (N-linked (GlcNAc...) asparagine). Residues 30 to 50 form a helical membrane-spanning segment; it reads MVVVSITFFLGVLGNGLVIWV. Over 51–61 the chain is Cytoplasmic; the sequence is AGFRMPHTVTT. A helical membrane pass occupies residues 62–82; the sequence is IWYLNLALADFSFTATLPFLL. Over 83–99 the chain is Extracellular; the sequence is VEMAMKEKWPFGWFLCK. Residues C98 and C176 are joined by a disulfide bond. A helical membrane pass occupies residues 100–120; it reads LVHIVVDVNLFGSVFLIALIA. Residues 121–144 lie on the Cytoplasmic side of the membrane; sequence LDRCICVLHPVWAQNHRTVSLARK. A helical membrane pass occupies residues 145-165; the sequence is VVVGPWIFALILTLPIFIFLT. The Extracellular segment spans residues 166-205; that stretch reads TVRIPGGDVYCTFNFGSWAQTDEEKLNTAITFVTTRGIIR. Residues 206 to 226 form a helical membrane-spanning segment; that stretch reads FLIGFSMPMSIVAVCYGLIAV. Over 227-241 the chain is Cytoplasmic; it reads KINRRNLVNSSRPLR. Residues 242-262 form a helical membrane-spanning segment; it reads VLTAVVASFFICWFPFQLVAL. Over 263 to 282 the chain is Extracellular; sequence LGTVWFKETLLSGSYKILDM. A helical transmembrane segment spans residues 283–305; the sequence is FVNPTSSLAYFNSCLNPMLYVFM. Over 306–351 the chain is Cytoplasmic; the sequence is GQDFRERFIHSLPYSLERALSEDSGQTSDSSTSSTSPPADIELKAP. A disordered region spans residues 325 to 351; that stretch reads LSEDSGQTSDSSTSSTSPPADIELKAP. Over residues 327–341 the composition is skewed to low complexity; sequence EDSGQTSDSSTSSTS.

The protein belongs to the G-protein coupled receptor 1 family. As to quaternary structure, interacts with Amyloid-beta protein 42, product of APP; the interaction takes place at the cell surface and the complex is then rapidly internalized. In terms of tissue distribution, primarily expressed in neutrophils. Not detected in vomeronasal neurons.

Its subcellular location is the cell membrane. Its function is as follows. High affinity receptor for N-formyl-methionyl peptides (FMLP), which are powerful neutrophil chemotactic factors. Stimulates chemotaxis in immune cells to site of infection or tissue damage upon recognition of several ligands, such as FMLP, or ligand involved in cell damage, disease or inflammation. Receptor for the chemokine-like protein FAM19A5, mediating FAM19A5-stimulated macrophage chemotaxis and the inhibitory effect on TNFSF11/RANKL-induced osteoclast differentiation. The chain is Formyl peptide receptor 2 (Fpr2) from Mus musculus (Mouse).